A 206-amino-acid chain; its full sequence is Large ribosomal subunit protein uL4 (206 aa).

The interval 43–78 (ARSGNRKQKDREEVKHTTKKPWRQKGTGRARAGMSS) is disordered. Residues 49–58 (KQKDREEVKH) are compositionally biased toward basic and acidic residues. Positions 59 to 70 (TTKKPWRQKGTG) are enriched in basic residues.

Belongs to the universal ribosomal protein uL4 family. As to quaternary structure, part of the 50S ribosomal subunit.

Functionally, one of the primary rRNA binding proteins, this protein initially binds near the 5'-end of the 23S rRNA. It is important during the early stages of 50S assembly. It makes multiple contacts with different domains of the 23S rRNA in the assembled 50S subunit and ribosome. In terms of biological role, forms part of the polypeptide exit tunnel. In Cupriavidus pinatubonensis (strain JMP 134 / LMG 1197) (Cupriavidus necator (strain JMP 134)), this protein is Large ribosomal subunit protein uL4.